A 351-amino-acid polypeptide reads, in one-letter code: UDP-glucose 4-epimerase 5 (351 aa).

Residues 13–15 (GYI), 34–38 (DNLDN), 64–65 (DL), phenylalanine 86, and lysine 90 each bind NAD(+). Residue 130–132 (SAT) participates in substrate binding. Tyrosine 154 (proton acceptor) is an active-site residue. NAD(+) contacts are provided by lysine 158 and tyrosine 182. Residues 182-184 (YFN), 203-205 (NNL), 221-223 (TVF), arginine 236, and 298-301 (RPGD) contribute to the substrate site.

The protein belongs to the NAD(P)-dependent epimerase/dehydratase family. As to quaternary structure, forms homodimers and heterodimers. NAD(+) is required as a cofactor. As to expression, widely expressed.

The enzyme catalyses UDP-alpha-D-glucose = UDP-alpha-D-galactose. The protein operates within carbohydrate metabolism; galactose metabolism. With respect to regulation, enhanced activity by NaCl. Inhibited by UDP. Its function is as follows. Catalyzes the interconversion between UDP-glucose and UDP-galactose. The polypeptide is UDP-glucose 4-epimerase 5 (Arabidopsis thaliana (Mouse-ear cress)).